Consider the following 311-residue polypeptide: Olfactory receptor 8H1 (311 aa).

Residues M1–M25 are Extracellular-facing. The N-linked (GlcNAc...) asparagine glycan is linked to N5. A helical transmembrane segment spans residues A26–I46. The Cytoplasmic portion of the chain corresponds to L47–Q54. A helical membrane pass occupies residues L55–T75. The Extracellular portion of the chain corresponds to V76–A98. A disulfide bond links C96 and C188. The chain crosses the membrane as a helical span at residues Q99 to Y119. Residues D120–R138 lie on the Cytoplasmic side of the membrane. Residues L139 to V159 form a helical membrane-spanning segment. Topologically, residues V160–I196 are extracellular. Residues M197 to S216 form a helical membrane-spanning segment. Residues Y217–A236 are Cytoplasmic-facing. The helical transmembrane segment at L237–T257 threads the bilayer. The Extracellular portion of the chain corresponds to Y258–D270. Residues Q271 to L291 form a helical membrane-spanning segment. The Cytoplasmic segment spans residues R292 to R311.

Belongs to the G-protein coupled receptor 1 family.

It is found in the cell membrane. Its function is as follows. Odorant receptor. The chain is Olfactory receptor 8H1 (OR8H1) from Homo sapiens (Human).